The following is a 217-amino-acid chain: Methylthioribulose-1-phosphate dehydratase (217 aa).

Positions 106 and 108 each coordinate Zn(2+).

It belongs to the aldolase class II family. MtnB subfamily. Requires Zn(2+) as cofactor.

The catalysed reaction is 5-(methylsulfanyl)-D-ribulose 1-phosphate = 5-methylsulfanyl-2,3-dioxopentyl phosphate + H2O. It participates in amino-acid biosynthesis; L-methionine biosynthesis via salvage pathway; L-methionine from S-methyl-5-thio-alpha-D-ribose 1-phosphate: step 2/6. Functionally, catalyzes the dehydration of methylthioribulose-1-phosphate (MTRu-1-P) into 2,3-diketo-5-methylthiopentyl-1-phosphate (DK-MTP-1-P). The chain is Methylthioribulose-1-phosphate dehydratase from Xanthomonas campestris pv. campestris (strain B100).